We begin with the raw amino-acid sequence, 183 residues long: Ribonuclease H (183 aa).

One can recognise an RNase H type-1 domain in the interval 2–151; that stretch reads SQARFIAFSD…VDQLAQAAAR (150 aa). Residues Asp11, Glu57, Asp79, and Asp143 each contribute to the Mg(2+) site.

It belongs to the RNase H family. As to quaternary structure, monomer. Requires Mg(2+) as cofactor.

Its subcellular location is the cytoplasm. The enzyme catalyses Endonucleolytic cleavage to 5'-phosphomonoester.. Functionally, endonuclease that specifically degrades the RNA of RNA-DNA hybrids. The chain is Ribonuclease H from Anaeromyxobacter dehalogenans (strain 2CP-1 / ATCC BAA-258).